Here is a 75-residue protein sequence, read N- to C-terminus: U6-lycotoxin-Ls1d (75 aa).

Positions 1–21 (MKLLFFTALVLVVISLIEVEA) are cleaved as a signal peptide. A propeptide spanning residues 22–25 (ENER) is cleaved from the precursor.

Belongs to the neurotoxin 19 (CSTX) family. 06 (U6-Lctx) subfamily. Post-translationally, contains 4 disulfide bonds. Expressed by the venom gland.

The protein localises to the secreted. This Lycosa singoriensis (Wolf spider) protein is U6-lycotoxin-Ls1d.